We begin with the raw amino-acid sequence, 104 residues long: Pyrimidine/purine nucleoside phosphorylase (104 aa).

This sequence belongs to the nucleoside phosphorylase PpnP family.

It catalyses the reaction a purine D-ribonucleoside + phosphate = a purine nucleobase + alpha-D-ribose 1-phosphate. The enzyme catalyses adenosine + phosphate = alpha-D-ribose 1-phosphate + adenine. The catalysed reaction is cytidine + phosphate = cytosine + alpha-D-ribose 1-phosphate. It carries out the reaction guanosine + phosphate = alpha-D-ribose 1-phosphate + guanine. It catalyses the reaction inosine + phosphate = alpha-D-ribose 1-phosphate + hypoxanthine. The enzyme catalyses thymidine + phosphate = 2-deoxy-alpha-D-ribose 1-phosphate + thymine. The catalysed reaction is uridine + phosphate = alpha-D-ribose 1-phosphate + uracil. It carries out the reaction xanthosine + phosphate = alpha-D-ribose 1-phosphate + xanthine. Its function is as follows. Catalyzes the phosphorolysis of diverse nucleosides, yielding D-ribose 1-phosphate and the respective free bases. Can use uridine, adenosine, guanosine, cytidine, thymidine, inosine and xanthosine as substrates. Also catalyzes the reverse reactions. In Janthinobacterium sp. (strain Marseille) (Minibacterium massiliensis), this protein is Pyrimidine/purine nucleoside phosphorylase.